We begin with the raw amino-acid sequence, 348 residues long: Lysophosphatidic acid receptor 2 (348 aa).

Over 1–30 (MGQCYYNETIGFFYNNSGKELSLHWRPKDV) the chain is Extracellular. Asparagine 7 and asparagine 15 each carry an N-linked (GlcNAc...) asparagine glycan. Residues 31 to 51 (VVVALGLTVSVLVLLTNLLVI) traverse the membrane as a helical segment. Over 52–66 (AAIASNRRFHQPIYY) the chain is Cytoplasmic. A helical transmembrane segment spans residues 67-87 (LLGNLAAADLFAGMAYLFLMF). Residues 88–104 (HTGPRTARLSIKGWFLR) lie on the Extracellular side of the membrane. A helical transmembrane segment spans residues 105–124 (QGLLDTSLTASVATLLAIAV). Over 125 to 144 (ERHRSVMAVQLHSRLPRGRV) the chain is Cytoplasmic. A helical transmembrane segment spans residues 145–165 (VTLIVGVWAAALGLGLLPAHF). The Extracellular segment spans residues 166–185 (WHCLCDLDSCSRMVPLFSRS). The helical transmembrane segment at 186 to 206 (YLAAWALSSLLVFLLMVAVYT) threads the bilayer. The Cytoplasmic portion of the chain corresponds to 207–239 (RIFFYVRRRVERMAEHVSCHPRYRETTLSLVKT). Residues 240-260 (VVIILGAFVVCWTPGQVVLLL) form a helical membrane-spanning segment. The Extracellular portion of the chain corresponds to 261 to 270 (DGLDCKSCNV). Residues 271 to 291 (LAVEKYFLLLAEANSLVNAVV) form a helical membrane-spanning segment. Topologically, residues 292–348 (YSCRDAEMRRTFRRLLCCMCLRWSSHKSARYSASAQTGASTRIMLPENGRPLMDSTL) are cytoplasmic. The S-palmitoyl cysteine moiety is linked to residue cysteine 308. The PDZ-binding motif lies at 345–348 (DSTL).

It belongs to the G-protein coupled receptor 1 family. In terms of assembly, interacts with SLC9A3R2/NHERF2, MAGI3 and PLCB3. Interacts with RALA and GRK2. As to expression, most abundantly expressed in testes, kidney, and embryonic brain. Other organs also express the transcript, including heart, lung, spleen, thymus, stomach, and adult brain. Several have little or no expression, including liver, small intestine, and skeletal muscle.

It localises to the cell surface. The protein localises to the cell membrane. Its function is as follows. Receptor for lysophosphatidic acid (LPA), a mediator of diverse cellular activities. Seems to be coupled to the G(i)/G(o), G(12)/G(13), and G(q) families of heteromeric G proteins. Plays a key role in phospholipase C-beta (PLC-beta) signaling pathway Stimulates phospholipase C (PLC) activity in a manner that is independent of RALA activation. This is Lysophosphatidic acid receptor 2 from Mus musculus (Mouse).